A 329-amino-acid polypeptide reads, in one-letter code: Phenylalanine--tRNA ligase alpha subunit (329 aa).

Glutamate 254 is a binding site for Mg(2+).

The protein belongs to the class-II aminoacyl-tRNA synthetase family. Phe-tRNA synthetase alpha subunit type 1 subfamily. In terms of assembly, tetramer of two alpha and two beta subunits. It depends on Mg(2+) as a cofactor.

The protein localises to the cytoplasm. The catalysed reaction is tRNA(Phe) + L-phenylalanine + ATP = L-phenylalanyl-tRNA(Phe) + AMP + diphosphate + H(+). The sequence is that of Phenylalanine--tRNA ligase alpha subunit from Haemophilus influenzae (strain PittEE).